A 430-amino-acid chain; its full sequence is Enolase (430 aa).

Position 163 (Gln163) interacts with (2R)-2-phosphoglycerate. The active-site Proton donor is the Glu205. 3 residues coordinate Mg(2+): Asp242, Glu287, and Asp314. Positions 339, 368, 369, and 390 each coordinate (2R)-2-phosphoglycerate. Lys339 serves as the catalytic Proton acceptor.

It belongs to the enolase family. Mg(2+) is required as a cofactor.

The protein localises to the cytoplasm. It localises to the secreted. It is found in the cell surface. It catalyses the reaction (2R)-2-phosphoglycerate = phosphoenolpyruvate + H2O. The protein operates within carbohydrate degradation; glycolysis; pyruvate from D-glyceraldehyde 3-phosphate: step 4/5. Its function is as follows. Catalyzes the reversible conversion of 2-phosphoglycerate (2-PG) into phosphoenolpyruvate (PEP). It is essential for the degradation of carbohydrates via glycolysis. This chain is Enolase, found in Alkaliphilus metalliredigens (strain QYMF).